The sequence spans 878 residues: Alanine--tRNA ligase (878 aa).

Zn(2+)-binding residues include His566, His570, Cys668, and His672.

This sequence belongs to the class-II aminoacyl-tRNA synthetase family. Zn(2+) is required as a cofactor.

It localises to the cytoplasm. It carries out the reaction tRNA(Ala) + L-alanine + ATP = L-alanyl-tRNA(Ala) + AMP + diphosphate. Its function is as follows. Catalyzes the attachment of alanine to tRNA(Ala) in a two-step reaction: alanine is first activated by ATP to form Ala-AMP and then transferred to the acceptor end of tRNA(Ala). Also edits incorrectly charged Ser-tRNA(Ala) and Gly-tRNA(Ala) via its editing domain. The chain is Alanine--tRNA ligase from Bacillus subtilis (strain 168).